The primary structure comprises 179 residues: ATP synthase subunit b (179 aa).

The chain crosses the membrane as a helical span at residues 27–47 (TAITFLVMLVVLGKFAWGPIV).

It belongs to the ATPase B chain family. As to quaternary structure, F-type ATPases have 2 components, F(1) - the catalytic core - and F(0) - the membrane proton channel. F(1) has five subunits: alpha(3), beta(3), gamma(1), delta(1), epsilon(1). F(0) has three main subunits: a(1), b(2) and c(10-14). The alpha and beta chains form an alternating ring which encloses part of the gamma chain. F(1) is attached to F(0) by a central stalk formed by the gamma and epsilon chains, while a peripheral stalk is formed by the delta and b chains.

It localises to the cell inner membrane. In terms of biological role, f(1)F(0) ATP synthase produces ATP from ADP in the presence of a proton or sodium gradient. F-type ATPases consist of two structural domains, F(1) containing the extramembraneous catalytic core and F(0) containing the membrane proton channel, linked together by a central stalk and a peripheral stalk. During catalysis, ATP synthesis in the catalytic domain of F(1) is coupled via a rotary mechanism of the central stalk subunits to proton translocation. Functionally, component of the F(0) channel, it forms part of the peripheral stalk, linking F(1) to F(0). The sequence is that of ATP synthase subunit b from Anaeromyxobacter sp. (strain K).